A 234-amino-acid chain; its full sequence is Synaptogyrin-1 (234 aa).

The residue at position 1 (Met1) is an N-acetylmethionine. At 1–23 (MEGGAYGAGKAGGAFDPYALVRQ) the chain is on the cytoplasmic side. The region spanning 20 to 173 (LVRQPHTILR…QAVLAFQRYQ (154 aa)) is the MARVEL domain. The helical transmembrane segment at 24-44 (PHTILRVVSWLFSIVVFGSIV) threads the bilayer. Residues 45–71 (NEGYLNSASEGEEFCIYNRNPNACSYG) are Lumenal-facing. A helical membrane pass occupies residues 72–92 (VAVGVLAFLTCLLYLALDVYF). The Cytoplasmic segment spans residues 93–103 (PQISSVKDRKK). A helical transmembrane segment spans residues 104–124 (AVLSDIGVSAFWAFLWFVGFC). The Lumenal segment spans residues 125–148 (YLANQWQVSKPKDNPLNEGTDAAR). Residues 149-169 (AAIAFSFFSIFTWAGQAVLAF) traverse the membrane as a helical segment. The Cytoplasmic portion of the chain corresponds to 170-234 (QRYQIGADSA…EPQGYQSQGY (65 aa)). Residues 192 to 234 (SSMPYAPYVEPSTGPDPAGMGGTYQQPANTFDTEPQGYQSQGY) are disordered. The span at 214 to 234 (TYQQPANTFDTEPQGYQSQGY) shows a compositional bias: polar residues.

This sequence belongs to the synaptogyrin family.

The protein resides in the cytoplasmic vesicle. The protein localises to the secretory vesicle. It is found in the synaptic vesicle membrane. It localises to the melanosome. Its function is as follows. May play a role in regulated exocytosis. Modulates the localization of synaptophysin/SYP into synaptic-like microvesicles and may therefore play a role in synaptic-like microvesicle formation and/or maturation. Involved in the regulation of short-term and long-term synaptic plasticity. In Pongo abelii (Sumatran orangutan), this protein is Synaptogyrin-1.